The chain runs to 209 residues: Thiamine-phosphate synthase (209 aa).

4-amino-2-methyl-5-(diphosphooxymethyl)pyrimidine is bound by residues 36 to 40 (QYRDK) and N68. Mg(2+) is bound by residues D69 and D87. Position 106 (T106) interacts with 4-amino-2-methyl-5-(diphosphooxymethyl)pyrimidine. Position 133–135 (133–135 (SST)) interacts with 2-[(2R,5Z)-2-carboxy-4-methylthiazol-5(2H)-ylidene]ethyl phosphate. K136 contributes to the 4-amino-2-methyl-5-(diphosphooxymethyl)pyrimidine binding site. G163 serves as a coordination point for 2-[(2R,5Z)-2-carboxy-4-methylthiazol-5(2H)-ylidene]ethyl phosphate.

This sequence belongs to the thiamine-phosphate synthase family. The cofactor is Mg(2+).

The catalysed reaction is 2-[(2R,5Z)-2-carboxy-4-methylthiazol-5(2H)-ylidene]ethyl phosphate + 4-amino-2-methyl-5-(diphosphooxymethyl)pyrimidine + 2 H(+) = thiamine phosphate + CO2 + diphosphate. It carries out the reaction 2-(2-carboxy-4-methylthiazol-5-yl)ethyl phosphate + 4-amino-2-methyl-5-(diphosphooxymethyl)pyrimidine + 2 H(+) = thiamine phosphate + CO2 + diphosphate. The enzyme catalyses 4-methyl-5-(2-phosphooxyethyl)-thiazole + 4-amino-2-methyl-5-(diphosphooxymethyl)pyrimidine + H(+) = thiamine phosphate + diphosphate. It functions in the pathway cofactor biosynthesis; thiamine diphosphate biosynthesis; thiamine phosphate from 4-amino-2-methyl-5-diphosphomethylpyrimidine and 4-methyl-5-(2-phosphoethyl)-thiazole: step 1/1. Its function is as follows. Condenses 4-methyl-5-(beta-hydroxyethyl)thiazole monophosphate (THZ-P) and 2-methyl-4-amino-5-hydroxymethyl pyrimidine pyrophosphate (HMP-PP) to form thiamine monophosphate (TMP). In Azotobacter vinelandii (strain DJ / ATCC BAA-1303), this protein is Thiamine-phosphate synthase.